The primary structure comprises 343 residues: Probable dual-specificity RNA methyltransferase RlmN (343 aa).

The Proton acceptor role is filled by Glu-92. The 231-residue stretch at 98–328 (YHHGLTACIS…TTVRREMGAD (231 aa)) folds into the Radical SAM core domain. Cys-105 and Cys-333 form a disulfide bridge. Positions 112, 116, and 119 each coordinate [4Fe-4S] cluster. S-adenosyl-L-methionine-binding positions include 159–160 (GE), Ser-191, 214–216 (SLH), and Asn-290. The S-methylcysteine intermediate role is filled by Cys-333.

It belongs to the radical SAM superfamily. RlmN family. It depends on [4Fe-4S] cluster as a cofactor.

Its subcellular location is the cytoplasm. The catalysed reaction is adenosine(2503) in 23S rRNA + 2 reduced [2Fe-2S]-[ferredoxin] + 2 S-adenosyl-L-methionine = 2-methyladenosine(2503) in 23S rRNA + 5'-deoxyadenosine + L-methionine + 2 oxidized [2Fe-2S]-[ferredoxin] + S-adenosyl-L-homocysteine. It carries out the reaction adenosine(37) in tRNA + 2 reduced [2Fe-2S]-[ferredoxin] + 2 S-adenosyl-L-methionine = 2-methyladenosine(37) in tRNA + 5'-deoxyadenosine + L-methionine + 2 oxidized [2Fe-2S]-[ferredoxin] + S-adenosyl-L-homocysteine. Its function is as follows. Specifically methylates position 2 of adenine 2503 in 23S rRNA and position 2 of adenine 37 in tRNAs. This Alkaliphilus oremlandii (strain OhILAs) (Clostridium oremlandii (strain OhILAs)) protein is Probable dual-specificity RNA methyltransferase RlmN.